We begin with the raw amino-acid sequence, 468 residues long: UDP-N-acetylmuramate--L-alanine ligase (468 aa).

An ATP-binding site is contributed by 116–122 (GTHGKTT).

It belongs to the MurCDEF family.

It is found in the cytoplasm. It carries out the reaction UDP-N-acetyl-alpha-D-muramate + L-alanine + ATP = UDP-N-acetyl-alpha-D-muramoyl-L-alanine + ADP + phosphate + H(+). Its pathway is cell wall biogenesis; peptidoglycan biosynthesis. Its function is as follows. Cell wall formation. The sequence is that of UDP-N-acetylmuramate--L-alanine ligase from Fusobacterium nucleatum subsp. nucleatum (strain ATCC 25586 / DSM 15643 / BCRC 10681 / CIP 101130 / JCM 8532 / KCTC 2640 / LMG 13131 / VPI 4355).